The primary structure comprises 144 residues: Large ribosomal subunit protein uL13 (144 aa).

This sequence belongs to the universal ribosomal protein uL13 family. As to quaternary structure, part of the 50S ribosomal subunit.

In terms of biological role, this protein is one of the early assembly proteins of the 50S ribosomal subunit, although it is not seen to bind rRNA by itself. It is important during the early stages of 50S assembly. The polypeptide is Large ribosomal subunit protein uL13 (Ruminiclostridium cellulolyticum (strain ATCC 35319 / DSM 5812 / JCM 6584 / H10) (Clostridium cellulolyticum)).